Reading from the N-terminus, the 165-residue chain is Probable velvet family sexual development regulator CC1G_12219 (165 aa).

A Velvet domain is found at 1–121 (MSNTDAQTSF…SVWGAQVNVR (121 aa)).

It belongs to the velvet family.

The protein localises to the nucleus. In terms of biological role, velvet-domain-containing protein that probably acts as a positive regulator of sexual development. The chain is Probable velvet family sexual development regulator CC1G_12219 from Coprinopsis cinerea (strain Okayama-7 / 130 / ATCC MYA-4618 / FGSC 9003) (Inky cap fungus).